The sequence spans 266 residues: Diphthine synthase (266 aa).

S-adenosyl-L-methionine contacts are provided by residues Leu9, Asp84, Val87, 112–113 (SI), Leu169, Ala210, and His235.

The protein belongs to the diphthine synthase family. Homodimer.

The enzyme catalyses 2-[(3S)-amino-3-carboxypropyl]-L-histidyl-[translation elongation factor 2] + 3 S-adenosyl-L-methionine = diphthine-[translation elongation factor 2] + 3 S-adenosyl-L-homocysteine + 3 H(+). It functions in the pathway protein modification; peptidyl-diphthamide biosynthesis. S-adenosyl-L-methionine-dependent methyltransferase that catalyzes the trimethylation of the amino group of the modified target histidine residue in translation elongation factor 2 (EF-2), to form an intermediate called diphthine. The three successive methylation reactions represent the second step of diphthamide biosynthesis. The chain is Diphthine synthase from Methanosarcina mazei (strain ATCC BAA-159 / DSM 3647 / Goe1 / Go1 / JCM 11833 / OCM 88) (Methanosarcina frisia).